We begin with the raw amino-acid sequence, 409 residues long: MEGYLNPINIFSEIGRLKKVLLHRPGEELENLTPFIMKKFLFDDIPYLEVARQEHEVFASTLKNNSVEIEYVEDLVSEVLASSVALKDKFISQFILEAEIKTDSTINILKDYFSNLTIDNMVSKMISGIVSKELKNYVSSLDDLVNSASLFIIDPMPNVLFTRDPFASIGNGITINKMSNKVRHRETIFAEYIFKYHPIYKKNVPIWFNRWEESSLEGGDEFVLSKDILVIGISERTEAESVEKLAISLFKNKTSFNTILAFKIPKNRAYMHLDTVFTQIDYSVFTSFTSDDMYFSIYALTYNSSSSKIHVKEEKARLRDVLSFYLGRKIDIIKCAGGDLIHGAREQWNDGANILAIAPGEVIAYSRNHVTNKLFEENGIKVYRIPSSELSRGRGGPRCMSMPLVREDI.

Cys-399 (amidino-cysteine intermediate) is an active-site residue.

Belongs to the arginine deiminase family.

It is found in the cytoplasm. The catalysed reaction is L-arginine + H2O = L-citrulline + NH4(+). It participates in amino-acid degradation; L-arginine degradation via ADI pathway; carbamoyl phosphate from L-arginine: step 1/2. This chain is Arginine deiminase, found in Borrelia garinii subsp. bavariensis (strain ATCC BAA-2496 / DSM 23469 / PBi) (Borreliella bavariensis).